A 379-amino-acid chain; its full sequence is Serpin B5 (379 aa).

3 N-linked (GlcNAc...) asparagine glycosylation sites follow: Asn-133, Asn-176, and Asn-361.

It belongs to the serpin family. Ov-serpin subfamily.

It localises to the secreted. It is found in the extracellular space. Functionally, may not exhibit serine protease inhibitory activity. This is Serpin B5 (serpinb5) from Xenopus tropicalis (Western clawed frog).